Reading from the N-terminus, the 168-residue chain is G/U mismatch-specific DNA glycosylase (168 aa).

It belongs to the uracil-DNA glycosylase (UDG) superfamily. TDG/mug family. In terms of assembly, binds DNA as a monomer.

The protein resides in the cytoplasm. The catalysed reaction is Specifically hydrolyzes mismatched double-stranded DNA and polynucleotides, releasing free uracil.. Excises ethenocytosine and uracil, which can arise by alkylation or deamination of cytosine, respectively, from the corresponding mispairs with guanine in ds-DNA. It is capable of hydrolyzing the carbon-nitrogen bond between the sugar-phosphate backbone of the DNA and the mispaired base. The complementary strand guanine functions in substrate recognition. Required for DNA damage lesion repair in stationary-phase cells. In Citrobacter koseri (strain ATCC BAA-895 / CDC 4225-83 / SGSC4696), this protein is G/U mismatch-specific DNA glycosylase.